Here is a 76-residue protein sequence, read N- to C-terminus: uncharacterized protein (76 aa).

To L.innocua lin1255, lin1742 and lin2600.

This is an uncharacterized protein from Listeria innocua serovar 6a (strain ATCC BAA-680 / CLIP 11262).